The sequence spans 141 residues: Large ribosomal subunit protein uL16 (141 aa).

The segment at 1–20 (MLMPKRTKYRKQQKGRNRGK) is disordered.

The protein belongs to the universal ribosomal protein uL16 family. As to quaternary structure, part of the 50S ribosomal subunit.

In terms of biological role, binds 23S rRNA and is also seen to make contacts with the A and possibly P site tRNAs. The polypeptide is Large ribosomal subunit protein uL16 (Nautilia profundicola (strain ATCC BAA-1463 / DSM 18972 / AmH)).